Reading from the N-terminus, the 198-residue chain is Potassium-transporting ATPase KdpC subunit (198 aa).

Residues 8 to 28 (ILAVLVFTILCGIIYPVSTTV) traverse the membrane as a helical segment.

The protein belongs to the KdpC family. In terms of assembly, the system is composed of three essential subunits: KdpA, KdpB and KdpC.

Its subcellular location is the cell membrane. Part of the high-affinity ATP-driven potassium transport (or Kdp) system, which catalyzes the hydrolysis of ATP coupled with the electrogenic transport of potassium into the cytoplasm. This subunit acts as a catalytic chaperone that increases the ATP-binding affinity of the ATP-hydrolyzing subunit KdpB by the formation of a transient KdpB/KdpC/ATP ternary complex. In Clostridium perfringens (strain ATCC 13124 / DSM 756 / JCM 1290 / NCIMB 6125 / NCTC 8237 / Type A), this protein is Potassium-transporting ATPase KdpC subunit.